We begin with the raw amino-acid sequence, 249 residues long: General transcription factor IIF subunit 2 (249 aa).

A2 carries the N-acetylalanine modification. 3 positions are modified to N6-acetyllysine: K22, K33, and K137. A Phosphoserine modification is found at S142. 2 residues coordinate DNA: G227 and H229. S248 bears the Phosphoserine mark.

This sequence belongs to the TFIIF beta subunit family. In terms of assembly, heterodimer of an alpha and a beta subunit. Interacts with HTATSF1 and URI1. Interacts with GPBP1. Interacts with GTF2B (via N-terminus); this interaction is inhibited in presence of GTF2F1. Part of TBP-based Pol II pre-initiation complex (PIC), in which Pol II core assembles with general transcription factors and other specific initiation factors including GTF2E1, GTF2E2, GTF2F1, GTF2F2, TCEA1, ERCC2, ERCC3, GTF2H2, GTF2H3, GTF2H4, GTF2H5, GTF2A1, GTF2A2, GTF2B and TBP; this large multi-subunit PIC complex mediates DNA unwinding and targets Pol II core to the transcription start site where the first phosphodiester bond forms.

It localises to the nucleus. In terms of biological role, TFIIF is a general transcription initiation factor that binds to RNA polymerase II and helps to recruit it to the initiation complex in collaboration with TFIIB. This chain is General transcription factor IIF subunit 2 (Gtf2f2), found in Mus musculus (Mouse).